Consider the following 341-residue polypeptide: Putative casein kinase I C03C10.2 (341 aa).

Positions 50–326 (WSIEGVIGNG…KCLYSPKSLL (277 aa)) constitute a Protein kinase domain. ATP contacts are provided by residues 56–64 (IGNGGYGQI) and lysine 79. Aspartate 173 serves as the catalytic Proton acceptor.

It belongs to the protein kinase superfamily. CK1 Ser/Thr protein kinase family. Casein kinase I subfamily.

The enzyme catalyses L-seryl-[protein] + ATP = O-phospho-L-seryl-[protein] + ADP + H(+). It carries out the reaction L-threonyl-[protein] + ATP = O-phospho-L-threonyl-[protein] + ADP + H(+). The polypeptide is Putative casein kinase I C03C10.2 (Caenorhabditis elegans).